A 511-amino-acid chain; its full sequence is Cytochrome P450 4A7 (511 aa).

Residues 1-4 constitute a propeptide that is removed on maturation; sequence MSVS. Heme is bound by residues E322 and C458.

Belongs to the cytochrome P450 family. The cofactor is heme. As to expression, liver, kidney, small intestine.

The protein resides in the endoplasmic reticulum membrane. It localises to the microsome membrane. The enzyme catalyses an omega-methyl-long-chain fatty acid + reduced [NADPH--hemoprotein reductase] + O2 = an omega-hydroxy-long-chain fatty acid + oxidized [NADPH--hemoprotein reductase] + H2O + H(+). Functionally, cytochromes P450 are a group of heme-thiolate monooxygenases. In liver microsomes, this enzyme is involved in an NADPH-dependent electron transport pathway. It oxidizes a variety of structurally unrelated compounds, including steroids, fatty acids, and xenobiotics. The kidney P-450 system is rather specialized for the omega-hydroxylation of fatty acids. Both P450-KA1 and P450-KA2 catalyze the omega- and (omega-1)-hydroxylation of various fatty acids with no drug-metabolizing activity, and hydroxylate prostaglandin A1 and A2 solely at the omega-position. In Oryctolagus cuniculus (Rabbit), this protein is Cytochrome P450 4A7 (CYP4A7).